The sequence spans 162 residues: Large ribosomal subunit protein uL30 (162 aa).

Belongs to the universal ribosomal protein uL30 family. As to quaternary structure, part of the 50S ribosomal subunit.

The polypeptide is Large ribosomal subunit protein uL30 (Staphylothermus marinus (strain ATCC 43588 / DSM 3639 / JCM 9404 / F1)).